Consider the following 1428-residue polypeptide: Gag-Pol polyprotein (1428 aa).

Gly-2 carries N-myristoyl glycine; by host lipidation. Residues 7–31 (VLSGKKLDSWEKIRLRPGGNKKYRL) are interaction with Gp41. The tract at residues 8-43 (LSGKKLDSWEKIRLRPGGNKKYRLKHLVWASRELEK) is interaction with host CALM1. Positions 12 to 19 (KLDSWEKI) are interaction with host AP3D1. The segment at 14 to 33 (DSWEKIRLRPGGNKKYRLKH) is interaction with membrane phosphatidylinositol 4,5-bisphosphate and RNA. Residues 16-22 (WEKIRLR) carry the Nuclear export signal motif. The short motif at 26–32 (NKKYRLK) is the Nuclear localization signal element. The tract at residues 73-77 (EELRS) is interaction with membrane phosphatidylinositol 4,5-bisphosphate. The disordered stretch occupies residues 108-130 (QNKNKQRTQQAAANTGSSQNYPI). The segment covering 114–130 (RTQQAAANTGSSQNYPI) has biased composition (polar residues). Tyr-128 carries the phosphotyrosine; by host modification. Positions 185–223 (NVVGGHQAAMQMLKDTINEEAAEWDRLHPVHAGPIPPGQ) are interaction with human PPIA/CYPA and NUP153. A dimerization/Multimerization of capsid protein p24 region spans residues 273–359 (YSPVSILDIR…GGPGHKARVL (87 aa)). CCHC-type zinc fingers lie at residues 384 to 401 (IKCFNCGKEGHLAKNCRA) and 405 to 422 (KGCWKCGKEGHQMKDCTE). Residues 438–475 (EAREFSSEQTRANSPTSRNLWDGGKDDLPCETGAERQG) are disordered. A compositionally biased stretch (polar residues) spans 444–456 (SEQTRANSPTSRN). Residues 460-475 (GGKDDLPCETGAERQG) are compositionally biased toward basic and acidic residues. Residues 482-486 (PQITL) are dimerization of protease. The region spanning 501–570 (IEALLDTGAD…TPVNIIGRNM (70 aa)) is the Peptidase A2 domain. The active-site For protease activity; shared with dimeric partner is the Asp-506. Dimerization of protease stretches follow at residues 530–536 (GIGGFIK) and 569–581 (NMLTQIGCTLNFP). Residues 624-814 (EGKISKIGPE…PPFLWMGYEL (191 aa)) form the Reverse transcriptase domain. The Mg(2+) site is built by Asp-690, Asp-765, and Asp-766. The interval 807–815 (FLWMGYELH) is RT 'primer grip'. The Tryptophan repeat motif motif lies at 978 to 994 (WEAWWMEYWQATWIPEW). Residues 1014–1137 (IAGAETFYVD…VDKLVSSGIR (124 aa)) form the RNase H type-1 domain. Residues Asp-1023, Glu-1058, Asp-1078, and Asp-1129 each contribute to the Mg(2+) site. Residues 1143 to 1184 (DGIDKAQEDHEKYHCNWRAMASDFNLPPVVAKEIVASCNKCQ) form an Integrase-type zinc finger. Residues His-1152, His-1156, Cys-1180, and Cys-1183 each contribute to the Zn(2+) site. Residues 1194–1344 (VDCSPGIWQL…SAGERIIDII (151 aa)) enclose the Integrase catalytic domain. Residues Asp-1204, Asp-1256, and Glu-1292 each contribute to the Mg(2+) site. Residues 1363 to 1410 (FRVYYRDSRDPIWKGPAKLLWKGEGAVVIQDNSDIKVVPRRKAKIIRD) constitute a DNA-binding region (integrase-type).

Homotrimer; further assembles as hexamers of trimers. Interacts with gp41 (via C-terminus). Interacts with host CALM1; this interaction induces a conformational change in the Matrix protein, triggering exposure of the myristate group. Interacts with host AP3D1; this interaction allows the polyprotein trafficking to multivesicular bodies during virus assembly. Part of the pre-integration complex (PIC) which is composed of viral genome, matrix protein, Vpr and integrase. In terms of assembly, homodimer; the homodimer further multimerizes as homohexamers or homopentamers. Interacts with human PPIA/CYPA; This interaction stabilizes the capsid. Interacts with human NUP153. Interacts with host PDZD8; this interaction stabilizes the capsid. Interacts with monkey TRIM5; this interaction destabilizes the capsid. As to quaternary structure, homodimer, whose active site consists of two apposed aspartic acid residues. Heterodimer of p66 RT and p51 RT (RT p66/p51). Heterodimerization of RT is essential for DNA polymerase activity. The overall folding of the subdomains is similar in p66 RT and p51 RT but the spatial arrangements of the subdomains are dramatically different. In terms of assembly, homotetramer; may further associate as a homohexadecamer. Part of the pre-integration complex (PIC) which is composed of viral genome, matrix protein, Vpr and integrase. Interacts with human SMARCB1/INI1 and human PSIP1/LEDGF isoform 1. Interacts with human KPNA3; this interaction might play a role in nuclear import of the pre-integration complex. Interacts with human NUP153; this interaction might play a role in nuclear import of the pre-integration complex. Requires Mg(2+) as cofactor. Specific enzymatic cleavages by the viral protease yield mature proteins. The protease is released by autocatalytic cleavage. The polyprotein is cleaved during and after budding, this process is termed maturation. Proteolytic cleavage of p66 RT removes the RNase H domain to yield the p51 RT subunit. Nucleocapsid protein p7 might be further cleaved after virus entry. Post-translationally, tyrosine phosphorylated presumably in the virion by a host kinase. Phosphorylation is apparently not a major regulator of membrane association. In terms of processing, phosphorylated possibly by host MAPK1; this phosphorylation is necessary for Pin1-mediated virion uncoating. Methylated by host PRMT6, impairing its function by reducing RNA annealing and the initiation of reverse transcription.

The protein localises to the host cell membrane. It localises to the host endosome. Its subcellular location is the host multivesicular body. It is found in the virion membrane. The protein resides in the host nucleus. The protein localises to the host cytoplasm. It localises to the virion. It carries out the reaction Specific for a P1 residue that is hydrophobic, and P1' variable, but often Pro.. It catalyses the reaction Endohydrolysis of RNA in RNA/DNA hybrids. Three different cleavage modes: 1. sequence-specific internal cleavage of RNA. Human immunodeficiency virus type 1 and Moloney murine leukemia virus enzymes prefer to cleave the RNA strand one nucleotide away from the RNA-DNA junction. 2. RNA 5'-end directed cleavage 13-19 nucleotides from the RNA end. 3. DNA 3'-end directed cleavage 15-20 nucleotides away from the primer terminus.. The catalysed reaction is 3'-end directed exonucleolytic cleavage of viral RNA-DNA hybrid.. The enzyme catalyses DNA(n) + a 2'-deoxyribonucleoside 5'-triphosphate = DNA(n+1) + diphosphate. Its activity is regulated as follows. Protease: The viral protease is inhibited by many synthetic protease inhibitors (PIs), such as amprenavir, atazanavir, indinavir, loprinavir, nelfinavir, ritonavir and saquinavir. Use of protease inhibitors in tritherapy regimens permit more ambitious therapeutic strategies. Reverse transcriptase/ribonuclease H: RT can be inhibited either by nucleoside RT inhibitors (NRTIs) or by non nucleoside RT inhibitors (NNRTIs). NRTIs act as chain terminators, whereas NNRTIs inhibit DNA polymerization by binding a small hydrophobic pocket near the RT active site and inducing an allosteric change in this region. Classical NRTIs are abacavir, adefovir (PMEA), didanosine (ddI), lamivudine (3TC), stavudine (d4T), tenofovir (PMPA), zalcitabine (ddC), and zidovudine (AZT). Classical NNRTIs are atevirdine (BHAP U-87201E), delavirdine, efavirenz (DMP-266), emivirine (I-EBU), and nevirapine (BI-RG-587). The tritherapies used as a basic effective treatment of AIDS associate two NRTIs and one NNRTI. Its function is as follows. Mediates, with Gag polyprotein, the essential events in virion assembly, including binding the plasma membrane, making the protein-protein interactions necessary to create spherical particles, recruiting the viral Env proteins, and packaging the genomic RNA via direct interactions with the RNA packaging sequence (Psi). Gag-Pol polyprotein may regulate its own translation, by the binding genomic RNA in the 5'-UTR. At low concentration, the polyprotein would promote translation, whereas at high concentration, the polyprotein would encapsidate genomic RNA and then shut off translation. Functionally, targets the polyprotein to the plasma membrane via a multipartite membrane-binding signal, that includes its myristoylated N-terminus. Matrix protein is part of the pre-integration complex. Implicated in the release from host cell mediated by Vpu. Binds to RNA. Forms the conical core that encapsulates the genomic RNA-nucleocapsid complex in the virion. Most core are conical, with only 7% tubular. The core is constituted by capsid protein hexamer subunits. The core is disassembled soon after virion entry. Host restriction factors such as TRIM5-alpha or TRIMCyp bind retroviral capsids and cause premature capsid disassembly, leading to blocks in reverse transcription. Capsid restriction by TRIM5 is one of the factors which restricts HIV-1 to the human species. Host PIN1 apparently facilitates the virion uncoating. On the other hand, interactions with PDZD8 or CYPA stabilize the capsid. In terms of biological role, encapsulates and protects viral dimeric unspliced genomic RNA (gRNA). Binds these RNAs through its zinc fingers. Acts as a nucleic acid chaperone which is involved in rearangement of nucleic acid secondary structure during gRNA retrotranscription. Also facilitates template switch leading to recombination. As part of the polyprotein, participates in gRNA dimerization, packaging, tRNA incorporation and virion assembly. Its function is as follows. Aspartyl protease that mediates proteolytic cleavages of Gag and Gag-Pol polyproteins during or shortly after the release of the virion from the plasma membrane. Cleavages take place as an ordered, step-wise cascade to yield mature proteins. This process is called maturation. Displays maximal activity during the budding process just prior to particle release from the cell. Also cleaves Nef and Vif, probably concomitantly with viral structural proteins on maturation of virus particles. Hydrolyzes host EIF4GI and PABP1 in order to shut off the capped cellular mRNA translation. The resulting inhibition of cellular protein synthesis serves to ensure maximal viral gene expression and to evade host immune response. Also mediates cleavage of host YTHDF3. Mediates cleavage of host CARD8, thereby activating the CARD8 inflammasome, leading to the clearance of latent HIV-1 in patient CD4(+) T-cells after viral reactivation; in contrast, HIV-1 can evade CARD8-sensing when its protease remains inactive in infected cells prior to viral budding. Functionally, multifunctional enzyme that converts the viral RNA genome into dsDNA in the cytoplasm, shortly after virus entry into the cell. This enzyme displays a DNA polymerase activity that can copy either DNA or RNA templates, and a ribonuclease H (RNase H) activity that cleaves the RNA strand of RNA-DNA heteroduplexes in a partially processive 3' to 5' endonucleasic mode. Conversion of viral genomic RNA into dsDNA requires many steps. A tRNA(3)-Lys binds to the primer-binding site (PBS) situated at the 5'-end of the viral RNA. RT uses the 3' end of the tRNA primer to perform a short round of RNA-dependent minus-strand DNA synthesis. The reading proceeds through the U5 region and ends after the repeated (R) region which is present at both ends of viral RNA. The portion of the RNA-DNA heteroduplex is digested by the RNase H, resulting in a ssDNA product attached to the tRNA primer. This ssDNA/tRNA hybridizes with the identical R region situated at the 3' end of viral RNA. This template exchange, known as minus-strand DNA strong stop transfer, can be either intra- or intermolecular. RT uses the 3' end of this newly synthesized short ssDNA to perform the RNA-dependent minus-strand DNA synthesis of the whole template. RNase H digests the RNA template except for two polypurine tracts (PPTs) situated at the 5'-end and near the center of the genome. It is not clear if both polymerase and RNase H activities are simultaneous. RNase H probably can proceed both in a polymerase-dependent (RNA cut into small fragments by the same RT performing DNA synthesis) and a polymerase-independent mode (cleavage of remaining RNA fragments by free RTs). Secondly, RT performs DNA-directed plus-strand DNA synthesis using the PPTs that have not been removed by RNase H as primers. PPTs and tRNA primers are then removed by RNase H. The 3' and 5' ssDNA PBS regions hybridize to form a circular dsDNA intermediate. Strand displacement synthesis by RT to the PBS and PPT ends produces a blunt ended, linear dsDNA copy of the viral genome that includes long terminal repeats (LTRs) at both ends. Catalyzes viral DNA integration into the host chromosome, by performing a series of DNA cutting and joining reactions. This enzyme activity takes place after virion entry into a cell and reverse transcription of the RNA genome in dsDNA. The first step in the integration process is 3' processing. This step requires a complex comprising the viral genome, matrix protein, Vpr and integrase. This complex is called the pre-integration complex (PIC). The integrase protein removes 2 nucleotides from each 3' end of the viral DNA, leaving recessed CA OH's at the 3' ends. In the second step, the PIC enters cell nucleus. This process is mediated through integrase and Vpr proteins, and allows the virus to infect a non dividing cell. This ability to enter the nucleus is specific of lentiviruses, other retroviruses cannot and rely on cell division to access cell chromosomes. In the third step, termed strand transfer, the integrase protein joins the previously processed 3' ends to the 5' ends of strands of target cellular DNA at the site of integration. The 5'-ends are produced by integrase-catalyzed staggered cuts, 5 bp apart. A Y-shaped, gapped, recombination intermediate results, with the 5'-ends of the viral DNA strands and the 3' ends of target DNA strands remaining unjoined, flanking a gap of 5 bp. The last step is viral DNA integration into host chromosome. This involves host DNA repair synthesis in which the 5 bp gaps between the unjoined strands are filled in and then ligated. Since this process occurs at both cuts flanking the HIV genome, a 5 bp duplication of host DNA is produced at the ends of HIV-1 integration. Alternatively, Integrase may catalyze the excision of viral DNA just after strand transfer, this is termed disintegration. The chain is Gag-Pol polyprotein (gag-pol) from Human immunodeficiency virus type 1 group M subtype A (isolate U455) (HIV-1).